The following is a 789-amino-acid chain: Disintegrin and metalloproteinase domain-containing protein 7 (789 aa).

Positions 1–25 are cleaved as a signal peptide; sequence MFPTGIFLMSVLISQMQGRGIVGVE. The propeptide occupies 26-176; it reads GQELVHPKKL…NYSCEGLNFT (151 aa). N-linked (GlcNAc...) asparagine glycosylation is found at N84, N167, and N174. Residues 177 to 668 are Extracellular-facing; sequence KKSTLIDAKI…WGEALNLTSV (492 aa). In terms of domain architecture, Peptidase M12B spans 199-393; it reads KFIELFVVAD…QKPACILNNP (195 aa). Intrachain disulfides connect C310–C388, C350–C372, C352–C357, and C459–C479. In terms of domain architecture, Disintegrin spans 401–487; the sequence is YPFCGNKKVD…ECPKDESQAN (87 aa). Residues N583, N628, and N664 are each glycosylated (N-linked (GlcNAc...) asparagine). Residues 669-689 form a helical membrane-spanning segment; that stretch reads SIMVVVLVMVIIGVGLVILLI. Residues 690 to 789 lie on the Cytoplasmic side of the membrane; it reads RYQKCIKMKQ…DSQSDCTRLG (100 aa). Residues 762 to 771 show a composition bias toward basic and acidic residues; sequence DPRGIADPKQ. The tract at residues 762–789 is disordered; sequence DPRGIADPKQNDNMNLNLDSQSDCTRLG. A compositionally biased stretch (polar residues) spans 772 to 789; sequence NDNMNLNLDSQSDCTRLG.

As to quaternary structure, interacts with ITM2B in sperm; the interaction increases following capacitation. Interacts with HSPA5 and CANX. As to expression, expressed specifically in the caput region of the epididymis (at protein level).

Its subcellular location is the membrane. Its function is as follows. Required for normal male fertility via maintenance of epithelial cell morphology in the caput epididymis and subsequently correct epididymis lumen structure required for sperm development. Plays a role in sperm motility, flagella morphology and tyrosine phosphorylation during sperm capacitance. Plays a role in normal expression levels of HSPA5, ITM2B and ADAM2 in sperm both prior to and post-capacitation. This is a non catalytic metalloprotease-like protein. The polypeptide is Disintegrin and metalloproteinase domain-containing protein 7 (Rattus norvegicus (Rat)).